The chain runs to 537 residues: Ribonuclease III domain-containing protein RNC1, chloroplastic (537 aa).

The transit peptide at 1–51 directs the protein to the chloroplast; sequence MELCSSSPSSSLLRICSSSAPEISFSSSISQFPSKTQSILTKSRFQNLRIC. 2 RNase III domains span residues 141 to 283 and 415 to 515; these read LLEV…LCFG and EHPR…TIYG.

In terms of assembly, interacts with RNA. Part of large ribonucleo-protein particles that contain CAF1 and/or CAF2.

It localises to the plastid. It is found in the chloroplast. Its function is as follows. Binds specific group II introns in chloroplasts and facilitates their splicing. Acts on both subgroup IIA and subgroup IIB introns. The substrates of the subgroup II also require the CRM domain proteins CAF1 or CAF2. Binds both single-stranded and double-stranded RNA non-specifically, but lacks endonuclease activity. Required for plastid ribosome biogenesis. The polypeptide is Ribonuclease III domain-containing protein RNC1, chloroplastic (Arabidopsis thaliana (Mouse-ear cress)).